The following is a 619-amino-acid chain: Probable serine/threonine-protein kinase WNK8 (619 aa).

Positions M1–R14 are enriched in basic and acidic residues. The tract at residues M1–P30 is disordered. A Protein kinase domain is found at G35–L291. Residues T115–F118 and K163 each bind ATP. Residue D180 is the Proton acceptor of the active site. Disordered stretches follow at residues P293–T335, Y419–H464, C508–D555, and G585–F619. The segment covering Y419–V428 has biased composition (acidic residues). Residues S439 to S448 show a composition bias toward low complexity. Positions Q602–F619 are enriched in basic residues.

It belongs to the protein kinase superfamily. Ser/Thr protein kinase family. WNK subfamily.

The enzyme catalyses L-seryl-[protein] + ATP = O-phospho-L-seryl-[protein] + ADP + H(+). It catalyses the reaction L-threonyl-[protein] + ATP = O-phospho-L-threonyl-[protein] + ADP + H(+). This chain is Probable serine/threonine-protein kinase WNK8 (WNK8), found in Oryza sativa subsp. japonica (Rice).